Reading from the N-terminus, the 235-residue chain is Large ribosomal subunit protein uL3 (235 aa).

N5-methylglutamine is present on Gln151.

Belongs to the universal ribosomal protein uL3 family. Part of the 50S ribosomal subunit. Forms a cluster with proteins L14 and L19. Methylated by PrmB.

In terms of biological role, one of the primary rRNA binding proteins, it binds directly near the 3'-end of the 23S rRNA, where it nucleates assembly of the 50S subunit. This is Large ribosomal subunit protein uL3 from Rhodospirillum rubrum (strain ATCC 11170 / ATH 1.1.1 / DSM 467 / LMG 4362 / NCIMB 8255 / S1).